The chain runs to 644 residues: Complement component C1q receptor (644 aa).

Residues 1-22 (MAISTGLFLLLGLLGQPWAGAA) form the signal peptide. Residues 23–572 (ADSQAVVCEG…SAHSDTDGQN (550 aa)) are Extracellular-facing. A C-type lectin domain is found at 31 to 173 (EGTACYTAHW…CGTPEAPGNS (143 aa)). An N-linked (GlcNAc...) asparagine glycan is attached at N102. Intrachain disulfides connect C140-C164, C261-C272, C268-C282, C284-C297, C303-C314, C308-C325, C327-C340, C346-C355, C351-C364, C366-C380, C386-C397, C393-C406, C408-C422, C428-C440, C436-C449, and C451-C464. 2 EGF-like domains span residues 257-298 (PKFG…VTCA) and 299-341 (SRNP…VHCV). N-linked (GlcNAc...) asparagine glycosylation occurs at N322. One can recognise an EGF-like 3; calcium-binding domain in the interval 342 to 381 (DIDECQDSPCAQDCVNTLGSFHCECWVGYQPSGPKEEACE). The EGF-like 4; calcium-binding domain maps to 382–423 (DVDECAAANSPCAQGCINTDGSFYCSCKEGYIVSGEDSTQCE). In terms of domain architecture, EGF-like 5; calcium-binding spans 424–465 (DIDECSDARGNPCDSLCFNTDGSFRCGCPPGWELAPNGVFCS). Residues 473-508 (LPARPPQKEDNDDRKESTMPPTEMPSSPSGSKDVSN) are disordered. The span at 478-489 (PQKEDNDDRKES) shows a compositional bias: basic and acidic residues. Residues 490-501 (TMPPTEMPSSPS) are compositionally biased toward low complexity. The chain crosses the membrane as a helical span at residues 573–593 (LLLFYILGTVVAISLLLVLAL). The Cytoplasmic portion of the chain corresponds to 594 to 644 (GILIYHKRRAKKEEIKEKKPQNAADSYSWVPERAESQAPENQYSPTPGTDC). The disordered stretch occupies residues 605-644 (KEEIKEKKPQNAADSYSWVPERAESQAPENQYSPTPGTDC). At S619 the chain carries Phosphoserine. Residues Y620 and Y636 each carry the phosphotyrosine modification. Residues 631–644 (APENQYSPTPGTDC) show a composition bias toward polar residues.

Homodimer. Interacts with C1QBP; the association may represent a cell surface C1q receptor. Interacts with surfactant protein A/SFTPA1. Interacts with multimerin-2/MMRN2. Interacts with DAG1; this interaction plays an important role in endothelial cell migration. Interacts with CBL. Interacts with IGFBP7. Interacts with VEGFR2. Post-translationally, N- and O-glycosylated. Phosphorylated on Tyr-620 and Tyr-636 by SRC; these phosphorylations promote endothelial cell adhesion and migration. In terms of tissue distribution, expressed in lung, heart and bone marrow. Expressed at lower level in ovary, whole embryo and fetal liver. Not detected in brain, adult liver or thymus. Highly expressed in peritoneal cavity and bone marrow macrophages. Not detected in epithelial cells.

Its subcellular location is the cell membrane. Its function is as follows. Cell surface receptor that plays a role in various physiological processes including inflammation, phagocytosis, and cell adhesion. Plays a role in phagocytosis and enhances the uptake of apoptotic cells and immune complexes by acting as a receptor for defense collagens including surfactant protein A/SFTPA1, C1q, and mannose-binding lectin (MBL2). Plays a role in the regulation of endothelial cell function and adhesion by activating angiogenesis. Mechanistically, exerts its angiogenic function by associating with beta-dystroglycan, leading to SRC-dependent phosphorylation and subsequent recruitment of CBL. In turn, CBL provides a docking site for downstream signaling components, such as CRKL to enhance cell migration. Participates in angiogenesis also by acting as a receptor for the ECM pan-endothelial glycoprotein multimerin-2/MMRN2 and IGFBP7 ligands. Both ligands play a non-redundant role in CD93-mediated endothelial cell function. Acts as a key regulator of endothelial barrier function through modulating VEGFR2 function. In Mus musculus (Mouse), this protein is Complement component C1q receptor (Cd93).